The sequence spans 360 residues: Phospho-N-acetylmuramoyl-pentapeptide-transferase (360 aa).

Topologically, residues 1-25 (MLVWLAEHLVKYYSGFNVFSYLTFR) are periplasmic. Residues 26 to 46 (AIVSLLTALFISLWMGPRMIA) traverse the membrane as a helical segment. Over 47–71 (RLQKLSFGQVVRNDGPESHFSKRGT) the chain is Cytoplasmic. The chain crosses the membrane as a helical span at residues 72–92 (PTMGGIMILTAIVISVLLWAY). Position 93 (Pro-93) is a topological domain, periplasmic. Residues 94–114 (SNPYVWCVLVVLIGYGIIGFV) form a helical membrane-spanning segment. Over 115-131 (DDYHKVVRKDTKGLIAR) the chain is Cytoplasmic. Residues 132–152 (WKYFWMSVIALGVAFALYLVG) traverse the membrane as a helical segment. Topologically, residues 153 to 167 (KDTPATQLVVPFFKD) are periplasmic. Residues 168–188 (VMPQLGLFYILLSYFVIVGTG) traverse the membrane as a helical segment. Topologically, residues 189 to 198 (NAVNLTDGLD) are cytoplasmic. Residues 199 to 219 (GLAIMPTVFVAAGFALVAWAT) traverse the membrane as a helical segment. The Periplasmic segment spans residues 220–235 (GNMNFANYLHIPYLRY). Residues 236 to 256 (AGELVIVCTAIVGAGLGFLWF) traverse the membrane as a helical segment. The Cytoplasmic segment spans residues 257 to 262 (NTYPAQ). A helical transmembrane segment spans residues 263-283 (VFMGDVGSLALGGALGIIAVL). The Periplasmic portion of the chain corresponds to 284–287 (LRQE). Residues 288–308 (FLLVIMGGVFVVETLSVILQV) form a helical membrane-spanning segment. At 309–337 (GSFKLRGQRIFRMAPIHHHYELKGWPEPR) the chain is on the cytoplasmic side. A helical membrane pass occupies residues 338–358 (VIVRFWIISLMLVLIGLATLK). Residues 359 to 360 (VR) are Periplasmic-facing.

It belongs to the glycosyltransferase 4 family. MraY subfamily. Requires Mg(2+) as cofactor.

Its subcellular location is the cell inner membrane. The enzyme catalyses UDP-N-acetyl-alpha-D-muramoyl-L-alanyl-gamma-D-glutamyl-meso-2,6-diaminopimeloyl-D-alanyl-D-alanine + di-trans,octa-cis-undecaprenyl phosphate = di-trans,octa-cis-undecaprenyl diphospho-N-acetyl-alpha-D-muramoyl-L-alanyl-D-glutamyl-meso-2,6-diaminopimeloyl-D-alanyl-D-alanine + UMP. It participates in cell wall biogenesis; peptidoglycan biosynthesis. In terms of biological role, catalyzes the initial step of the lipid cycle reactions in the biosynthesis of the cell wall peptidoglycan: transfers peptidoglycan precursor phospho-MurNAc-pentapeptide from UDP-MurNAc-pentapeptide onto the lipid carrier undecaprenyl phosphate, yielding undecaprenyl-pyrophosphoryl-MurNAc-pentapeptide, known as lipid I. This chain is Phospho-N-acetylmuramoyl-pentapeptide-transferase, found in Salmonella paratyphi A (strain ATCC 9150 / SARB42).